Reading from the N-terminus, the 440-residue chain is Chitinase-like protein Idgf2 (440 aa).

An N-terminal signal peptide occupies residues Met1–Ala20. A GH18 domain is found at Ser22–Leu440. Cys26 and Cys53 are disulfide-bonded. The N-linked (GlcNAc...) asparagine glycan is linked to Asn220. Cys342 and Cys425 are disulfide-bonded.

Belongs to the glycosyl hydrolase 18 family. IDGF subfamily. Post-translationally, glycosylated. In terms of tissue distribution, primarily expressed in yolk cells and fat body. In larvae, it is expressed in the imaginal ring and weakly expressed in imaginal disks. More strongly expressed than Idgf1 and Idgf3.

It is found in the secreted. Cooperates with insulin-like peptides to stimulate the proliferation, polarization and motility of imaginal disk cells. May act by stabilizing the binding of insulin-like peptides to its receptor through a simultaneous interaction with both molecules to form a multiprotein signaling complex. The polypeptide is Chitinase-like protein Idgf2 (Idgf2) (Drosophila melanogaster (Fruit fly)).